A 260-amino-acid polypeptide reads, in one-letter code: Ribonuclease 3 (260 aa).

The region spanning 16 to 145 is the RNase III domain; the sequence is VQLLESRLGL…VFGAVFLTSG (130 aa). Position 58 (Glu-58) interacts with Mg(2+). The active site involves Asp-62. Residues Asp-131 and Glu-134 each coordinate Mg(2+). Residue Glu-134 is part of the active site. Residues 172–241 form the DRBM domain; the sequence is DYKTLLQEMA…AQATLEKLRE (70 aa). Residues 219–260 are disordered; that stretch reads ATGRSKKEAEQSAAQATLEKLREDAACPTSPPPGTPRHDTPA.

Belongs to the ribonuclease III family. In terms of assembly, homodimer. Mg(2+) serves as cofactor.

It localises to the cytoplasm. It catalyses the reaction Endonucleolytic cleavage to 5'-phosphomonoester.. Digests double-stranded RNA. Involved in the processing of primary rRNA transcript to yield the immediate precursors to the large and small rRNAs (23S and 16S). Processes some mRNAs, and tRNAs when they are encoded in the rRNA operon. Processes pre-crRNA and tracrRNA of type II CRISPR loci if present in the organism. The polypeptide is Ribonuclease 3 (Myxococcus xanthus (strain DK1622)).